The primary structure comprises 286 residues: Beta-lactamase SHV-24 (286 aa).

An N-terminal signal peptide occupies residues 1–21 (MRYIRLCIISLLATLPLAVHA). Catalysis depends on Ser-66, which acts as the Acyl-ester intermediate. A disulfide bridge links Cys-73 with Cys-119. Glu-164 (proton acceptor) is an active-site residue. 230–232 (KTG) is a binding site for substrate.

Belongs to the class-A beta-lactamase family.

The enzyme catalyses a beta-lactam + H2O = a substituted beta-amino acid. Hydrolyzes ampicillin. Can also hydrolyze cephaloridine, aztreonam and ceftazidime with a low catalytic rate. This Escherichia coli protein is Beta-lactamase SHV-24 (bla).